The chain runs to 170 residues: Adenine phosphoribosyltransferase (170 aa).

The protein belongs to the purine/pyrimidine phosphoribosyltransferase family. Homodimer.

It is found in the cytoplasm. It catalyses the reaction AMP + diphosphate = 5-phospho-alpha-D-ribose 1-diphosphate + adenine. It functions in the pathway purine metabolism; AMP biosynthesis via salvage pathway; AMP from adenine: step 1/1. Functionally, catalyzes a salvage reaction resulting in the formation of AMP, that is energically less costly than de novo synthesis. This Carboxydothermus hydrogenoformans (strain ATCC BAA-161 / DSM 6008 / Z-2901) protein is Adenine phosphoribosyltransferase.